Here is a 283-residue protein sequence, read N- to C-terminus: 3-methyl-2-oxobutanoate hydroxymethyltransferase (283 aa).

Positions 46 and 85 each coordinate Mg(2+). Residues 46–47 (DS), D85, and K115 contribute to the 3-methyl-2-oxobutanoate site. Mg(2+) is bound at residue E117. The Proton acceptor role is filled by E184.

The protein belongs to the PanB family. In terms of assembly, homodecamer; pentamer of dimers. The cofactor is Mg(2+).

The protein localises to the cytoplasm. It catalyses the reaction 3-methyl-2-oxobutanoate + (6R)-5,10-methylene-5,6,7,8-tetrahydrofolate + H2O = 2-dehydropantoate + (6S)-5,6,7,8-tetrahydrofolate. It participates in cofactor biosynthesis; (R)-pantothenate biosynthesis; (R)-pantoate from 3-methyl-2-oxobutanoate: step 1/2. Catalyzes the reversible reaction in which hydroxymethyl group from 5,10-methylenetetrahydrofolate is transferred onto alpha-ketoisovalerate to form ketopantoate. The protein is 3-methyl-2-oxobutanoate hydroxymethyltransferase of Acetivibrio thermocellus (strain ATCC 27405 / DSM 1237 / JCM 9322 / NBRC 103400 / NCIMB 10682 / NRRL B-4536 / VPI 7372) (Clostridium thermocellum).